We begin with the raw amino-acid sequence, 807 residues long: Phenylalanine--tRNA ligase beta subunit (807 aa).

One can recognise a tRNA-binding domain in the interval 39–153 (SARAQGVVVG…SLPPNGSPVA (115 aa)). Residues 407-491 (AEAGPVLLRR…RLVGFDRFGA (85 aa)) form the B5 domain. Residues D469, D475, E478, and E479 each coordinate Mg(2+). Residues 713–806 (PTVPFSERDL…LSKQFQAELR (94 aa)) form the FDX-ACB domain.

Belongs to the phenylalanyl-tRNA synthetase beta subunit family. Type 1 subfamily. Tetramer of two alpha and two beta subunits. The cofactor is Mg(2+).

It is found in the cytoplasm. It carries out the reaction tRNA(Phe) + L-phenylalanine + ATP = L-phenylalanyl-tRNA(Phe) + AMP + diphosphate + H(+). The chain is Phenylalanine--tRNA ligase beta subunit from Synechococcus sp. (strain CC9605).